A 73-amino-acid polypeptide reads, in one-letter code: Translation initiation factor IF-1 (73 aa).

Positions 1-73 constitute an S1-like domain; the sequence is MAKKDGVIEL…ARGRIVYRYK (73 aa).

Belongs to the IF-1 family. Component of the 30S ribosomal translation pre-initiation complex which assembles on the 30S ribosome in the order IF-2 and IF-3, IF-1 and N-formylmethionyl-tRNA(fMet); mRNA recruitment can occur at any time during PIC assembly.

It localises to the cytoplasm. Its function is as follows. One of the essential components for the initiation of protein synthesis. Stabilizes the binding of IF-2 and IF-3 on the 30S subunit to which N-formylmethionyl-tRNA(fMet) subsequently binds. Helps modulate mRNA selection, yielding the 30S pre-initiation complex (PIC). Upon addition of the 50S ribosomal subunit IF-1, IF-2 and IF-3 are released leaving the mature 70S translation initiation complex. This chain is Translation initiation factor IF-1, found in Tropheryma whipplei (strain TW08/27) (Whipple's bacillus).